A 93-amino-acid chain; its full sequence is Phosphocarrier protein HPr (93 aa).

Positions 2 to 89 constitute an HPr domain; it reads AERRVNVGWA…KLVAEGLEEL (88 aa). Catalysis depends on histidine 15, which acts as the Pros-phosphohistidine intermediate.

Belongs to the HPr family.

It is found in the cytoplasm. In terms of biological role, general (non sugar-specific) component of the phosphoenolpyruvate-dependent sugar phosphotransferase system (sugar PTS). This major carbohydrate active-transport system catalyzes the phosphorylation of incoming sugar substrates concomitantly with their translocation across the cell membrane. The phosphoryl group from phosphoenolpyruvate (PEP) is transferred to the phosphoryl carrier protein HPr by enzyme I. Phospho-HPr then transfers it to the PTS EIIA domain. The protein is Phosphocarrier protein HPr (ptsH) of Streptomyces coelicolor (strain ATCC BAA-471 / A3(2) / M145).